Reading from the N-terminus, the 433-residue chain is Protein translocase subunit SecY (433 aa).

A run of 10 helical transmembrane segments spans residues 17-37 (IVFTILILIVCRFGSFIPIPG), 71-91 (IFALAIMPYITASIIIQLMSV), 117-137 (LTVLLASFQAYGVAISLESIV), 141-161 (GPVVILAGFFFRVTTVITLVV), 184-204 (LIIFIGIISGVPSAIISMFEL), 212-232 (PLIALAVCIGVVVLIAIIIFF), 268-288 (GVIPPIFASSILLFPATLANF), 310-330 (YILLYVALIMFFSFFYTAIVF), 366-386 (LTVIGGIYLSVICVIPELLMN), and 388-408 (YVISLSLGGTSFLIVVNVVLD).

This sequence belongs to the SecY/SEC61-alpha family. As to quaternary structure, component of the Sec protein translocase complex. Heterotrimer consisting of SecY, SecE and SecG subunits. The heterotrimers can form oligomers, although 1 heterotrimer is thought to be able to translocate proteins. Interacts with the ribosome. Interacts with SecDF, and other proteins may be involved. Interacts with SecA.

It localises to the cell inner membrane. The central subunit of the protein translocation channel SecYEG. Consists of two halves formed by TMs 1-5 and 6-10. These two domains form a lateral gate at the front which open onto the bilayer between TMs 2 and 7, and are clamped together by SecE at the back. The channel is closed by both a pore ring composed of hydrophobic SecY resides and a short helix (helix 2A) on the extracellular side of the membrane which forms a plug. The plug probably moves laterally to allow the channel to open. The ring and the pore may move independently. The sequence is that of Protein translocase subunit SecY from Rickettsia felis (strain ATCC VR-1525 / URRWXCal2) (Rickettsia azadi).